A 519-amino-acid polypeptide reads, in one-letter code: Cytosol aminopeptidase (519 aa).

An N6-succinyllysine modification is found at K45. Phosphoserine is present on S54. K61 and K103 each carry N6-succinyllysine. Phosphoserine occurs at positions 180 and 194. 2 residues coordinate Zn(2+): L202 and M203. K221 is modified (N6-acetyllysine; alternate). K221 carries the post-translational modification N6-succinyllysine; alternate. The residue at position 238 (S238) is a Phosphoserine. Zn(2+)-binding residues include K282 and D287. The substrate site is built by K282, D287, S292, and K294. D287 is a Mg(2+) binding site. K294 is a catalytic residue. R303, D305, D364, and E366 together coordinate Zn(2+). The substrate site is built by D305 and D364. Mg(2+) contacts are provided by D364 and E366. R368 is a catalytic residue. K455 carries the N6-acetyllysine; alternate modification. K455 is modified (N6-succinyllysine; alternate). An N6-succinyllysine modification is found at K476. Residue K489 is modified to N6-acetyllysine; alternate. K489 bears the N6-succinyllysine; alternate mark.

This sequence belongs to the peptidase M17 family. In terms of assembly, homohexamer. It depends on Zn(2+) as a cofactor. The cofactor is Mn(2+).

It is found in the cytoplasm. The catalysed reaction is Release of an N-terminal amino acid, Xaa-|-Yaa-, in which Xaa is preferably Leu, but may be other amino acids including Pro although not Arg or Lys, and Yaa may be Pro. Amino acid amides and methyl esters are also readily hydrolyzed, but rates on arylamides are exceedingly low.. It catalyses the reaction an S-substituted L-cysteinylglycine + H2O = an S-substituted L-cysteine + glycine. It carries out the reaction L-cysteinylglycine + H2O = L-cysteine + glycine. The enzyme catalyses S-benzyl-L-cysteinylglycine + H2O = S-benzyl-L-cysteine + glycine. The catalysed reaction is Release of N-terminal proline from a peptide.. Functionally, cytosolic metallopeptidase that catalyzes the removal of unsubstituted N-terminal hydrophobic amino acids from various peptides. The presence of Zn(2+) ions is essential for the peptidase activity, and the association with other cofactors can modulate the substrate spectificity of the enzyme. For instance, in the presence of Mn(2+), it displays a specific Cys-Gly hydrolyzing activity of Cys-Gly-S-conjugates. Involved in the metabolism of glutathione and in the degradation of glutathione S-conjugates, which may play a role in the control of the cell redox status. This Mus musculus (Mouse) protein is Cytosol aminopeptidase.